The primary structure comprises 51 residues: Large ribosomal subunit protein bL33 (51 aa).

Residues 1–23 (MREKIKLESSAGTGHFYTTTKNK) form a disordered region. Positions 10-20 (SAGTGHFYTTT) are enriched in polar residues.

Belongs to the bacterial ribosomal protein bL33 family.

This is Large ribosomal subunit protein bL33 from Nitrosomonas eutropha (strain DSM 101675 / C91 / Nm57).